A 1112-amino-acid chain; its full sequence is Constitutive coactivator of PPAR-gamma-like protein 1 (1112 aa).

An interaction with YES1, SRC and FYN region spans residues 339-403; it reads PPHYLARPNP…YSLSEPALTL (65 aa). Positions 372-525 are disordered; it reads QAKPAVPQVP…GKGSHMGTVQ (154 aa). Composition is skewed to polar residues over residues 403-418 and 433-445; these read LDTS…SYSN and SPIN…SPNH. Positions 479 to 500 are enriched in basic and acidic residues; the sequence is GWEKTGSHAEPLARGDPGDQVK. Residues 503 to 512 are compositionally biased toward polar residues; the sequence is GSSTASSGSQ. Thr653 carries the phosphothreonine modification. Positions 827 to 1112 are RNA binding; the sequence is AEQAAKVEKM…LEAAVLNKEE (286 aa). Arg871, Arg882, and Arg884 each carry omega-N-methylarginine. Positions 919–943 are disordered; it reads AFSGSDSSRTSKSQGGVQPIPSQGG. A compositionally biased stretch (polar residues) spans 922-934; sequence GSDSSRTSKSQGG. Lys930 carries the post-translational modification N6-acetyllysine. Ser958 carries the phosphoserine modification. Omega-N-methylarginine is present on residues Arg980 and Arg984. Ser1021 and Ser1042 each carry phosphoserine. Residues 1030 to 1090 are disordered; sequence KSKSGESKSS…PCNTNPHLNA (61 aa). A compositionally biased stretch (polar residues) spans 1070–1090; it reads HSESALNNDSKPCNTNPHLNA.

This sequence belongs to the constitutive coactivator of PPAR-gamma family. Interacts with PURA. Interacts with SRC family protein kinases YES1, SRC and FYN. Upon tyrosine phosphorylation, interacts with PIK3R1. Interacts with IGF2BP1/IMP-1 in an RNA-dependent manner. In terms of processing, arg-980 is dimethylated, probably to asymmetric dimethylarginine. Post-translationally, phosphorylated on tyrosine by src family kinases upon ultraviolet exposure. In the brain, predominantly expressed in the hippocampus, caudate putamen, cerebral cortex and cerebellum. Expression is restricted to neurons (at protein level).

Its subcellular location is the cytoplasm. It is found in the cell membrane. Component of the oxidative stress-induced survival signaling. May regulate the activation of SRC family protein kinases. May act as a scaffolding protein enabling SRC family protein kinases to phosphorylate and activate PI3-kinase. Binds IGF2 RNA and promotes the production of IGF2 protein. The sequence is that of Constitutive coactivator of PPAR-gamma-like protein 1 (FAM120A) from Mus musculus (Mouse).